We begin with the raw amino-acid sequence, 373 residues long: Lipoyl synthase (373 aa).

Residues 12-36 are disordered; sequence HVVSNDHPSSSPLQPGVKQSGEDKI. [4Fe-4S] cluster contacts are provided by C81, C86, C92, C107, C111, C114, and S323. Residues 93–312 enclose the Radical SAM core domain; it reads FSHGTATFMI…EEYGMALGFS (220 aa). Residues 346–373 are disordered; sequence PAVSSTEHRERHTIASKSASKTESIPHR. A compositionally biased stretch (polar residues) spans 360–373; the sequence is ASKSASKTESIPHR.

This sequence belongs to the radical SAM superfamily. Lipoyl synthase family. [4Fe-4S] cluster serves as cofactor.

The protein localises to the cytoplasm. The enzyme catalyses [[Fe-S] cluster scaffold protein carrying a second [4Fe-4S](2+) cluster] + N(6)-octanoyl-L-lysyl-[protein] + 2 oxidized [2Fe-2S]-[ferredoxin] + 2 S-adenosyl-L-methionine + 4 H(+) = [[Fe-S] cluster scaffold protein] + N(6)-[(R)-dihydrolipoyl]-L-lysyl-[protein] + 4 Fe(3+) + 2 hydrogen sulfide + 2 5'-deoxyadenosine + 2 L-methionine + 2 reduced [2Fe-2S]-[ferredoxin]. It functions in the pathway protein modification; protein lipoylation via endogenous pathway; protein N(6)-(lipoyl)lysine from octanoyl-[acyl-carrier-protein]: step 2/2. In terms of biological role, catalyzes the radical-mediated insertion of two sulfur atoms into the C-6 and C-8 positions of the octanoyl moiety bound to the lipoyl domains of lipoate-dependent enzymes, thereby converting the octanoylated domains into lipoylated derivatives. The protein is Lipoyl synthase of Xylella fastidiosa (strain M12).